We begin with the raw amino-acid sequence, 305 residues long: N-acetylneuraminate lyase (305 aa).

Residues T51 and T52 each contribute to the aceneuramate site. The Proton donor role is filled by Y143. K173 serves as the catalytic Schiff-base intermediate with substrate. 5 residues coordinate aceneuramate: T175, G197, D199, E200, and S216.

It belongs to the DapA family. NanA subfamily. Homotetramer.

The protein localises to the cytoplasm. The enzyme catalyses aceneuramate = aldehydo-N-acetyl-D-mannosamine + pyruvate. The protein operates within amino-sugar metabolism; N-acetylneuraminate degradation. Catalyzes the cleavage of N-acetylneuraminic acid (sialic acid) to form pyruvate and N-acetylmannosamine via a Schiff base intermediate. It prevents sialic acids from being recycled and returning to the cell surface. Involved in the N-glycolylneuraminic acid (Neu5Gc) degradation pathway. This Xenopus tropicalis (Western clawed frog) protein is N-acetylneuraminate lyase.